Consider the following 269-residue polypeptide: Pertussis toxin subunit 1 homolog (269 aa).

A signal peptide spans 1-34 (MRCTRAIRQTARTGWLTWLAILAVTAPVTSPAWA).

The protein belongs to the bacterial exotoxin subunit A family.

The polypeptide is Pertussis toxin subunit 1 homolog (ptxA) (Bordetella bronchiseptica (strain ATCC BAA-588 / NCTC 13252 / RB50) (Alcaligenes bronchisepticus)).